The sequence spans 122 residues: uncharacterized protein (122 aa).

This is an uncharacterized protein from Dictyostelium discoideum (Social amoeba).